Consider the following 85-residue polypeptide: MLTIRLALGGSKKRPFYHLTVTDSRNARDGSHKEQIGFFNPVARGQEIRLSVNEERVNYWLSVGAQTSERVAQLLKEHNKTKAAA.

The protein belongs to the bacterial ribosomal protein bS16 family.

In Pseudomonas syringae pv. tomato (strain ATCC BAA-871 / DC3000), this protein is Small ribosomal subunit protein bS16.